A 634-amino-acid chain; its full sequence is 3-dehydroshikimate dehydratase (634 aa).

Residues glutamate 134, aspartate 165, glutamine 191, and glutamate 239 each coordinate a divalent metal cation. 2 VOC domains span residues 295 to 414 and 440 to 590; these read GIEF…LVER and RVDH…VFTE. Residues histidine 443, histidine 521, and glutamate 599 each coordinate Mg(2+).

The protein belongs to the bacterial two-domain DSD family. In terms of assembly, homodimer. The cofactor is Co(2+). Ni(2+) serves as cofactor. Requires Mg(2+) as cofactor. It depends on Mn(2+) as a cofactor.

The enzyme catalyses 3-dehydroshikimate = 3,4-dihydroxybenzoate + H2O. It functions in the pathway aromatic compound metabolism; 3,4-dihydroxybenzoate biosynthesis. Functionally, catalyzes the conversion of 3-dehydroshikimate to protocatechuate (3,4-dihydroxybenzoate), a common intermediate of quinate and shikimate degradation pathways. Is required for growth on either quinate or shikimate as a sole carbon source. The chain is 3-dehydroshikimate dehydratase from Pseudomonas aeruginosa (strain ATCC 15692 / DSM 22644 / CIP 104116 / JCM 14847 / LMG 12228 / 1C / PRS 101 / PAO1).